The primary structure comprises 241 residues: Probable cobalt-factor III C(17)-methyltransferase (241 aa).

The protein belongs to the precorrin methyltransferase family.

The catalysed reaction is Co(II)-factor III + S-adenosyl-L-methionine + H(+) = Co(II)-factor IV + S-adenosyl-L-homocysteine. The protein operates within cofactor biosynthesis; adenosylcobalamin biosynthesis; cob(II)yrinate a,c-diamide from sirohydrochlorin (anaerobic route): step 3/10. Functionally, methyltransferase that likely catalyzes the ring contraction and methylation of C-17 in cobalt-factor III to form cobalt-factor IV. May also convert cobalt-precorrin-3 to cobalt-precorrin-4. This is Probable cobalt-factor III C(17)-methyltransferase (cbiH) from Salmonella typhimurium (strain LT2 / SGSC1412 / ATCC 700720).